We begin with the raw amino-acid sequence, 285 residues long: Bifunctional protein FolD (285 aa).

166–168 (GAS) contributes to the NADP(+) binding site.

This sequence belongs to the tetrahydrofolate dehydrogenase/cyclohydrolase family. Homodimer.

It carries out the reaction (6R)-5,10-methylene-5,6,7,8-tetrahydrofolate + NADP(+) = (6R)-5,10-methenyltetrahydrofolate + NADPH. It catalyses the reaction (6R)-5,10-methenyltetrahydrofolate + H2O = (6R)-10-formyltetrahydrofolate + H(+). The protein operates within one-carbon metabolism; tetrahydrofolate interconversion. In terms of biological role, catalyzes the oxidation of 5,10-methylenetetrahydrofolate to 5,10-methenyltetrahydrofolate and then the hydrolysis of 5,10-methenyltetrahydrofolate to 10-formyltetrahydrofolate. The protein is Bifunctional protein FolD of Thioalkalivibrio sulfidiphilus (strain HL-EbGR7).